A 267-amino-acid polypeptide reads, in one-letter code: L-erythrulose-1-phosphate isomerase (267 aa).

The active-site Electrophile is the histidine 95. Glutamate 168 serves as the catalytic Proton acceptor. Substrate is bound by residues glycine 174 and serine 211.

The protein belongs to the triosephosphate isomerase family. As to quaternary structure, homodimer.

It localises to the cytoplasm. The enzyme catalyses L-erythrulose 1-phosphate = D-erythrulose 4-phosphate. The protein operates within carbohydrate metabolism; erythritol degradation. Its function is as follows. Catalyzes the isomerization of D-erythrulose-4P to L-erythrulose-1P. The protein is L-erythrulose-1-phosphate isomerase of Rhizobium etli (strain ATCC 51251 / DSM 11541 / JCM 21823 / NBRC 15573 / CFN 42).